Consider the following 355-residue polypeptide: Peptide chain release factor 1 (355 aa).

An N5-methylglutamine modification is found at Gln-233. The segment at 280 to 310 (ERRKKEQKRANNRRGQVGSGDRSERIRTYNF) is disordered.

This sequence belongs to the prokaryotic/mitochondrial release factor family. Methylated by PrmC. Methylation increases the termination efficiency of RF1.

The protein localises to the cytoplasm. In terms of biological role, peptide chain release factor 1 directs the termination of translation in response to the peptide chain termination codons UAG and UAA. In Rickettsia canadensis (strain McKiel), this protein is Peptide chain release factor 1.